A 407-amino-acid polypeptide reads, in one-letter code: Arginine biosynthesis bifunctional protein ArgJ (407 aa).

Threonine 155, lysine 181, threonine 192, glutamate 278, asparagine 402, and threonine 407 together coordinate substrate. Catalysis depends on threonine 192, which acts as the Nucleophile.

This sequence belongs to the ArgJ family. As to quaternary structure, heterotetramer of two alpha and two beta chains.

It localises to the cytoplasm. The enzyme catalyses N(2)-acetyl-L-ornithine + L-glutamate = N-acetyl-L-glutamate + L-ornithine. It carries out the reaction L-glutamate + acetyl-CoA = N-acetyl-L-glutamate + CoA + H(+). It functions in the pathway amino-acid biosynthesis; L-arginine biosynthesis; L-ornithine and N-acetyl-L-glutamate from L-glutamate and N(2)-acetyl-L-ornithine (cyclic): step 1/1. The protein operates within amino-acid biosynthesis; L-arginine biosynthesis; N(2)-acetyl-L-ornithine from L-glutamate: step 1/4. In terms of biological role, catalyzes two activities which are involved in the cyclic version of arginine biosynthesis: the synthesis of N-acetylglutamate from glutamate and acetyl-CoA as the acetyl donor, and of ornithine by transacetylation between N(2)-acetylornithine and glutamate. The chain is Arginine biosynthesis bifunctional protein ArgJ from Thiobacillus denitrificans (strain ATCC 25259 / T1).